A 482-amino-acid polypeptide reads, in one-letter code: Potential E3 ubiquitin-protein ligase ariadne-2 (482 aa).

The tract at residues 125–334 is TRIAD supradomain; sequence AKGYCSVCAM…SEYYECSRYK (210 aa). Residues C129, C132, C145, H147, C150, C153, C172, C177, C218, C223, C239, C242, C247, C250, H255, C260, C287, and C290 each coordinate Zn(2+). The RING-type 1 zinc finger occupies 129-177; sequence CSVCAMDGYTELPHLTCGHCFCEHCWKSHVESRLSEGVASRIECMESEC. Residues 198-260 form an IBR-type zinc finger; it reads LKYERFLLRD…GADYHAPTSC (63 aa). The segment at 287–316 adopts an RING-type 2; atypical zinc-finger fold; sequence CPQCHSCIEKAGGCNHIQCTRCRHHFCWMC. Residue C300 is part of the active site. Residues C305, C308, C313, C316, H323, and C330 each contribute to the Zn(2+) site. Positions 433–459 form a coiled coil; the sequence is FEYQQAQLEKEVEELAWAVERADGTAR.

It belongs to the RBR family. Ariadne subfamily.

It is found in the nucleus. It carries out the reaction [E2 ubiquitin-conjugating enzyme]-S-ubiquitinyl-L-cysteine + [acceptor protein]-L-lysine = [E2 ubiquitin-conjugating enzyme]-L-cysteine + [acceptor protein]-N(6)-ubiquitinyl-L-lysine.. Might act as an E3 ubiquitin-protein ligase, or as part of E3 complex, which accepts ubiquitin from specific E2 ubiquitin-conjugating enzymes, such as UBC-2/UBE2L3, and then transfers it to substrates. This chain is Potential E3 ubiquitin-protein ligase ariadne-2, found in Caenorhabditis elegans.